A 348-amino-acid chain; its full sequence is Rhodopsin (348 aa).

An N-acetylmethionine modification is found at Met1. At 1–36 (MNGTEGPNFYVPFSNKTGVVRSPFEEPQYYLAEPWQ) the chain is on the extracellular side. 2 N-linked (GlcNAc...) asparagine glycosylation sites follow: Asn2 and Asn15. The chain crosses the membrane as a helical span at residues 37 to 61 (FSCLAAYMFMLIVLGFPINFLTLYV). The Cytoplasmic portion of the chain corresponds to 62–73 (TIQHKKLRTPLN). Residues 74–96 (YILLNLAIADLFMVFGGFTTTLY) traverse the membrane as a helical segment. Over 97–110 (TSLHGYFVFGPTGC) the chain is Extracellular. The cysteines at positions 110 and 187 are disulfide-linked. A helical membrane pass occupies residues 111 to 133 (DLEGFFATLGGEIALWSLVVLAI). The 'Ionic lock' involved in activated form stabilization motif lies at 134–136 (ERY). Residues 134–152 (ERYIVVCKPMSNFRFGENH) lie on the Cytoplasmic side of the membrane. A helical transmembrane segment spans residues 153–173 (AIMGVAFTWVMALACAAPPLV). Residues 174 to 202 (GWSRYIPEGMQCSCGIDYYTLKPEVNNES) are Extracellular-facing. Zn(2+) is bound at residue Glu201. The helical transmembrane segment at 203–224 (FVIYMFVVHFTIPMVVIFFCYG) threads the bilayer. At 225–252 (QLVFTVKEAAAQQQESATTQKAEKEVTR) the chain is on the cytoplasmic side. Residues 253 to 274 (MVIIMVIAFLICWLPYAGVAFY) traverse the membrane as a helical segment. At 275–286 (IFTHQGSNFGPI) the chain is on the extracellular side. Gln279 lines the Zn(2+) pocket. A helical transmembrane segment spans residues 287-308 (LMTLPAFFAKTSAVYNPVIYIM). At Lys296 the chain carries N6-(retinylidene)lysine. Residues 309–348 (LNKQFRTCMLTTLCCGKIPLGDDEASATASKTETSQVAPA) are Cytoplasmic-facing. 2 S-palmitoyl cysteine lipidation sites follow: Cys322 and Cys323. The tract at residues 330 to 348 (DDEASATASKTETSQVAPA) is interaction with SAG. Phosphoserine is present on Ser334. Thr336 is subject to Phosphothreonine. Phosphoserine is present on Ser338. Phosphothreonine is present on residues Thr340 and Thr342. Ser343 is modified (phosphoserine).

It belongs to the G-protein coupled receptor 1 family. Opsin subfamily. Homodimer. May form a complex composed of RHO, GRK1 and RCVRN in a Ca(2+)-dependent manner; RCVRN prevents the interaction between GRK1 and RHO. Interacts with GRK1. Interacts (phosphorylated form) with SAG. Interacts with GNAT1. Interacts with GNAT3. SAG and G-proteins compete for a common binding site. Interacts with PRCD; the interaction promotes PRCD stability. Forms a complex with ASAP1 and ARF4. Forms a complex with ASAP1, RAB11A, Rabin8/RAB3IP, ARF4 and RAB11FIP3; the complex regulates Golgi-to-cilia rhodopsin/RHO transport in photoreceptors. In terms of processing, phosphorylated on some or all of the serine and threonine residues present in the C-terminal region. Contains one covalently linked retinal chromophore. Upon light absorption, the covalently bound 11-cis-retinal is converted to all-trans-retinal. After hydrolysis of the Schiff base and release of the covalently bound all-trans-retinal, active rhodopsin is regenerated by binding of a fresh molecule of 11-cis-retinal.

It localises to the membrane. Its subcellular location is the cell projection. The protein resides in the cilium. It is found in the photoreceptor outer segment. Functionally, photoreceptor required for image-forming vision at low light intensity. Required for photoreceptor cell viability after birth. Light-induced isomerization of 11-cis to all-trans retinal triggers a conformational change that activates signaling via G-proteins. Subsequent receptor phosphorylation mediates displacement of the bound G-protein alpha subunit by the arrestin SAG and terminates signaling. The protein is Rhodopsin (RHO) of Caluromys philander (Bare-tailed woolly opossum).